The chain runs to 123 residues: Loki profilin-3 (123 aa).

It belongs to the Asgard profilin family.

The protein resides in the cytoplasm. It localises to the cytoskeleton. Binds to actin and affects the structure of the cytoskeleton. At high concentrations inhibits spontaneous rabbit actin nucleation. This strongly suggests this archaea has a profilin-regulated actin system, and actin-type genes can be identified in this organism. In Lokiarchaeum sp. (strain GC14_75), this protein is Loki profilin-3.